Here is a 64-residue protein sequence, read N- to C-terminus: Large ribosomal subunit protein bL35 (64 aa).

Composition is skewed to basic residues over residues 1–26 (MPKMKTHRGAAKRFKKTGTGKIKRSK) and 33–44 (LTKKSPKRKRKL). Positions 1-44 (MPKMKTHRGAAKRFKKTGTGKIKRSKAYTSHILTKKSPKRKRKL) are disordered.

It belongs to the bacterial ribosomal protein bL35 family.

In Alkaliphilus oremlandii (strain OhILAs) (Clostridium oremlandii (strain OhILAs)), this protein is Large ribosomal subunit protein bL35.